Consider the following 93-residue polypeptide: Putative regulatory protein Amet_2791 (93 aa).

This sequence belongs to the RemA family.

This is Putative regulatory protein Amet_2791 from Alkaliphilus metalliredigens (strain QYMF).